A 757-amino-acid polypeptide reads, in one-letter code: MSKRKEFDEDAPVDPSDLLEFINLGAGNEVGRSCHVIQYKGKTVMLDAGVHPAYTGLSALPFFDEFDLSTVDVLLISHFHLDHVASLPYVMQKTNFRGRVFMTHPTKAVCKWLLSDYVKVSNVGMEDQLYDEKDLLAAFDRIEAVDYHSTIEVEGIKFTPYHAGHVLGACMYFVEMAGVNILFTGDYSREEDRHLHVAEVPPKRPDVLITESTYGTASHQPRLEKEARLLNIIHSTIRNGGRVLMPVFALGRAQELLLILDEYWNNHLDLRSVPIYYASSLARKCMAIFQTYVNMMNDNIRKIFAERNPFIFRFVKSLRNLEKFDDIGPSVILASPGMLQNGVSRTLLERWAPDPRNTLLLTGYSVEGTMAKQITNEPIEIVSLSGQKIPRRMAVEELSFAAHVDYLQNSEFIDLVNADHIILVHGEQTNMGRLKSALASKFHNRKVDVKVYTPRNCVPLYLPFKGERLVRALGKVAVHKPKEGDIMSGILIQKDANYKLMSAEDLRDFSDLTTTVLTQKQVIPFFSSMELANFHLKQMFGYVKQSKTKAGQPQYTVMDAITLTLIQEHKLALEWVGNIMNDTIADSVITILLGIESSPASVKLTSHKCNHLHSHLDKPPKVSKEEDRIKKLMMFLDNQFGESMTKTEKGVEIKFEKYEASIDFSTMKVECSNEALRSRVVHVLSRAINTILPFSEASQNDVSEDDFENEESDDDKIFEQQTKIEDDVKNENKTEPVEEQKSEEKNEQPNLKKEELS.

Zn(2+)-binding residues include His-78, His-80, Asp-82, His-83, His-165, and Asp-186. His-403 functions as the Proton donor in the catalytic mechanism. His-425 lines the Zn(2+) pocket. The tract at residues 698-757 is disordered; the sequence is SQNDVSEDDFENEESDDDKIFEQQTKIEDDVKNENKTEPVEEQKSEEKNEQPNLKKEELS. Positions 702-714 are enriched in acidic residues; sequence VSEDDFENEESDD. Residues 715 to 757 show a composition bias toward basic and acidic residues; the sequence is DKIFEQQTKIEDDVKNENKTEPVEEQKSEEKNEQPNLKKEELS.

The protein belongs to the metallo-beta-lactamase superfamily. RNA-metabolizing metallo-beta-lactamase-like family. CPSF2/YSH1 subfamily.

The protein localises to the cytoplasm. It localises to the nucleus. In terms of biological role, component of the cleavage factor I (CF I) involved in pre-mRNA 3'-end processing. The polypeptide is Endoribonuclease ysh1 (ysh1) (Schizosaccharomyces pombe (strain 972 / ATCC 24843) (Fission yeast)).